A 129-amino-acid polypeptide reads, in one-letter code: Phosphoribosyl-AMP cyclohydrolase (129 aa).

Asp-85 is a binding site for Mg(2+). A Zn(2+)-binding site is contributed by Cys-86. The Mg(2+) site is built by Asp-87 and Asp-89. The Zn(2+) site is built by Cys-102 and Cys-109.

Belongs to the PRA-CH family. Homodimer. Requires Mg(2+) as cofactor. Zn(2+) serves as cofactor.

The protein resides in the cytoplasm. The catalysed reaction is 1-(5-phospho-beta-D-ribosyl)-5'-AMP + H2O = 1-(5-phospho-beta-D-ribosyl)-5-[(5-phospho-beta-D-ribosylamino)methylideneamino]imidazole-4-carboxamide. It participates in amino-acid biosynthesis; L-histidine biosynthesis; L-histidine from 5-phospho-alpha-D-ribose 1-diphosphate: step 3/9. Catalyzes the hydrolysis of the adenine ring of phosphoribosyl-AMP. The protein is Phosphoribosyl-AMP cyclohydrolase of Methanococcus maripaludis (strain C5 / ATCC BAA-1333).